A 271-amino-acid polypeptide reads, in one-letter code: Proteasome inhibitor PI31 subunit (271 aa).

Ala2 is modified (N-acetylalanine). The segment at 2 to 150 (AGLEVLFASA…PIHEQWEKAN (149 aa)) is important for homodimerization and interaction with FBXO7. Ser153 is subject to Phosphoserine. Arg205 carries the post-translational modification Omega-N-methylarginine. Arg219 is modified (asymmetric dimethylarginine). The segment at 222–271 (IDPSSGLPNRLPPGAVPPGARFDPFGPIGTSPPGPNPDHLPPPGYDDMYL) is disordered. Arg231 carries the post-translational modification Omega-N-methylarginine. The span at 251-265 (TSPPGPNPDHLPPPG) shows a compositional bias: pro residues. At Ser252 the chain carries Phosphoserine.

It belongs to the proteasome inhibitor PI31 family. In terms of assembly, monomer and homodimer. Interacts with FBXO7.

It localises to the cytoplasm. It is found in the endoplasmic reticulum. In terms of biological role, plays an important role in control of proteasome function. Inhibits the hydrolysis of protein and peptide substrates by the 20S proteasome. Also inhibits the activation of the proteasome by the proteasome regulatory proteins PA700 and PA28. In Pongo abelii (Sumatran orangutan), this protein is Proteasome inhibitor PI31 subunit (PSMF1).